A 171-amino-acid chain; its full sequence is ATP synthase subunit b (171 aa).

A helical transmembrane segment spans residues 13–33 (GVEWGTTFVTLVTFVILIILL).

This sequence belongs to the ATPase B chain family. As to quaternary structure, F-type ATPases have 2 components, F(1) - the catalytic core - and F(0) - the membrane proton channel. F(1) has five subunits: alpha(3), beta(3), gamma(1), delta(1), epsilon(1). F(0) has three main subunits: a(1), b(2) and c(10-14). The alpha and beta chains form an alternating ring which encloses part of the gamma chain. F(1) is attached to F(0) by a central stalk formed by the gamma and epsilon chains, while a peripheral stalk is formed by the delta and b chains.

The protein resides in the cell membrane. Its function is as follows. F(1)F(0) ATP synthase produces ATP from ADP in the presence of a proton or sodium gradient. F-type ATPases consist of two structural domains, F(1) containing the extramembraneous catalytic core and F(0) containing the membrane proton channel, linked together by a central stalk and a peripheral stalk. During catalysis, ATP synthesis in the catalytic domain of F(1) is coupled via a rotary mechanism of the central stalk subunits to proton translocation. Functionally, component of the F(0) channel, it forms part of the peripheral stalk, linking F(1) to F(0). This is ATP synthase subunit b from Staphylococcus epidermidis (strain ATCC 12228 / FDA PCI 1200).